Here is a 1550-residue protein sequence, read N- to C-terminus: DNA excision repair protein ERCC-6-like 2 (1550 aa).

The disordered stretch occupies residues 1–23; it reads MDPSAPQPRAETSGKDIWHPGER. Over residues 12–22 the composition is skewed to basic and acidic residues; sequence TSGKDIWHPGE. In terms of domain architecture, Helicase ATP-binding spans 135–321; that stretch reads YGHYIHGGGC…WCVMDWAVPG (187 aa). 148-155 lines the ATP pocket; the sequence is DDMGLGKT. The DEAH box motif lies at 272 to 275; the sequence is DEAH. Positions 512-662 constitute a Helicase C-terminal domain; the sequence is VLQQLLNHCR…CVVVGSENAK (151 aa). Residues 785–796 carry the Atypical PIP-box motif; that stretch reads PGQLTLLQCGFS. 3 disordered regions span residues 808–848, 914–1002, and 1354–1410; these read DSDG…TSKH, FPDN…SSLR, and AETK…TRTG. Basic and acidic residues-rich tracts occupy residues 830–840 and 933–953; these read EAKDAGCEKNQ and TEHTVKTRNNDNSRNTDDKRN. Phosphoserine is present on residues Ser-980 and Ser-983. The segment covering 992 to 1002 has biased composition (basic residues); the sequence is SRVRKRASSLR. Over residues 1359–1388 the composition is skewed to polar residues; that stretch reads SPVSSTQEIDSGKNSQASEDTVTSRSLNSE. Ser-1373 and Ser-1376 each carry phosphoserine. Residues 1389–1405 show a composition bias toward basic and acidic residues; sequence SETRERRLENTMKDQQD.

It belongs to the SNF2/RAD54 helicase family. Interacts with NEK6. Interacts (via an atypical PIP-box) with PCNA; this interaction facilitates cenrtomeric localization of ERCC6L2. Interacts with CYREN; this interaction is DNA independent. Interacts with XRCC6 and XRCC5. Phosphorylated by NEK6. Expressed in bone marrow (at protein level).

The protein localises to the nucleus. The protein resides in the cytoplasm. It localises to the cytoskeleton. It is found in the microtubule organizing center. Its subcellular location is the centrosome. The protein localises to the mitochondrion. The protein resides in the chromosome. It localises to the centromere. Its function is as follows. Promotes double-strand break (DSB) end-joining and facilitates programmed recombination by controlling how DNA ends are joined in a spatially oriented manner during repair. Also plays a role in DNA repair by restricting DNA end resection in double strand break (DSB) repair. Facilitates replication of complex DNA regions and regulates the maintenance of chromatin structure. The protein is DNA excision repair protein ERCC-6-like 2 of Homo sapiens (Human).